The sequence spans 624 residues: Actin-related protein 8 (624 aa).

Methionine 1 is modified (N-acetylmethionine). A compositionally biased stretch (basic and acidic residues) spans 1–25; that stretch reads MTQAEKGDTENGKEKGGEKEKEQRG. A disordered region spans residues 1 to 29; it reads MTQAEKGDTENGKEKGGEKEKEQRGVKRP. ATP is bound by residues serine 55 and threonine 56. Serine 132 bears the Phosphoserine mark. Residue 283-286 coordinates ATP; it reads DVGD. Residue serine 412 is modified to Phosphoserine. Positions 430 to 462 are disordered; the sequence is SKQEQSAKATADRKSASKPIGFEGDLRGQSSDL.

This sequence belongs to the actin family. ARP8 subfamily. As to quaternary structure, component of the chromatin remodeling INO80 complex; specifically part of a complex module associated with the DBINO domain of INO80. Exists as monomers and dimers, but the dimer is most probably the biologically relevant form required for stable interactions with histones that exploits the twofold symmetry of the nucleosome core.

The protein localises to the nucleus. Its subcellular location is the chromosome. Its function is as follows. Plays an important role in the functional organization of mitotic chromosomes. Exhibits low basal ATPase activity, and unable to polymerize. Proposed core component of the chromatin remodeling INO80 complex which is involved in transcriptional regulation, DNA replication and probably DNA repair. Required for the recruitment of INO80 (and probably the INO80 complex) to sites of DNA damage Strongly prefer nucleosomes and H3-H4 tetramers over H2A-H2B dimers, suggesting it may act as a nucleosome recognition module within the complex. The polypeptide is Actin-related protein 8 (ACTR8) (Pongo abelii (Sumatran orangutan)).